Consider the following 209-residue polypeptide: Protein GET1 (209 aa).

The Lumenal segment spans residues 1-3; it reads MSL. The helical transmembrane segment at 4 to 23 threads the bilayer; sequence LLVIFLLELVVQLVNTIGAK. The Cytoplasmic portion of the chain corresponds to 24-110; sequence TINNLLWRFY…SFSRKLTIYR (87 aa). A coiled-coil region spans residues 74 to 101; that stretch reads WARLQRKHDKLMDELEKKKSQLDAHRTS. Residues 111–131 form a helical membrane-spanning segment; that stretch reads WILTRGMQWFLCFWFSSQPMF. The Lumenal portion of the chain corresponds to 132–155; it reads WLPYGWFPYWVEWLVSFPNAPMGS. A helical transmembrane segment spans residues 156–172; it reads VSIVVWQSACSGVLALV. Residues 173–209 lie on the Cytoplasmic side of the membrane; sequence IEAVMAVVRYTGGTGMQKQRQPVPAAGGAPGTSKKDL. Residues 188–209 are disordered; the sequence is MQKQRQPVPAAGGAPGTSKKDL.

It belongs to the WRB/GET1 family. As to quaternary structure, interacts with GET3.

It localises to the endoplasmic reticulum membrane. Its function is as follows. Required for the post-translational delivery of tail-anchored (TA) proteins to the endoplasmic reticulum. Acts as a membrane receptor for soluble GET3, which recognizes and selectively binds the transmembrane domain of TA proteins in the cytosol. The chain is Protein GET1 from Chaetomium thermophilum (strain DSM 1495 / CBS 144.50 / IMI 039719) (Thermochaetoides thermophila).